A 420-amino-acid polypeptide reads, in one-letter code: UDP-N-acetylglucosamine 1-carboxyvinyltransferase (420 aa).

22–23 provides a ligand contact to phosphoenolpyruvate; it reads KN. Residue Arg92 participates in UDP-N-acetyl-alpha-D-glucosamine binding. Catalysis depends on Cys116, which acts as the Proton donor. At Cys116 the chain carries 2-(S-cysteinyl)pyruvic acid O-phosphothioketal. UDP-N-acetyl-alpha-D-glucosamine-binding positions include 121 to 125, 161 to 164, Asp306, and Ile328; these read RPVDL and KVSV.

Belongs to the EPSP synthase family. MurA subfamily.

The protein localises to the cytoplasm. It carries out the reaction phosphoenolpyruvate + UDP-N-acetyl-alpha-D-glucosamine = UDP-N-acetyl-3-O-(1-carboxyvinyl)-alpha-D-glucosamine + phosphate. Its pathway is cell wall biogenesis; peptidoglycan biosynthesis. Its function is as follows. Cell wall formation. Adds enolpyruvyl to UDP-N-acetylglucosamine. The chain is UDP-N-acetylglucosamine 1-carboxyvinyltransferase from Yersinia pseudotuberculosis serotype O:1b (strain IP 31758).